The following is a 651-amino-acid chain: Probable potassium transport system protein Kup (651 aa).

A run of 12 helical transmembrane segments spans residues 41–61 (LVLGALGVVYGDIGTSPIYAF), 82–102 (VVSLIFWALTLVVTIKYVLFV), 130–150 (LILGVGICGAALFFGDAVITP), 163–183 (IVAPDLTPFVVPITVVILVTL), 194–214 (VAIVFGPIMALWFLALGASGL), 235–255 (FLMISPGIAFITVGAVFLAMT), 276–296 (WLWIVFPCLLLNYFGQAAFIL), 309–329 (MMPSFALLPMVLLATAATVIA), 366–386 (IYIPRVNLLLGLAVVILVLGF), 395–415 (AYGIAVTGNMLVTTVLLYIVM), 426–446 (ALPIIVGFLIIDIMFFGANII), and 450–470 (EGGWASIGIAAILVLIMWTWV).

This sequence belongs to the HAK/KUP transporter (TC 2.A.72) family.

It is found in the cell inner membrane. It carries out the reaction K(+)(in) + H(+)(in) = K(+)(out) + H(+)(out). In terms of biological role, transport of potassium into the cell. Likely operates as a K(+):H(+) symporter. The protein is Probable potassium transport system protein Kup of Brucella anthropi (strain ATCC 49188 / DSM 6882 / CCUG 24695 / JCM 21032 / LMG 3331 / NBRC 15819 / NCTC 12168 / Alc 37) (Ochrobactrum anthropi).